The sequence spans 152 residues: Snaclec coagulation factor IX/factor X-binding protein subunit A (152 aa).

The N-terminal stretch at 1–23 (MGRFIFLSFGLLVVFLSLSGTGA) is a signal peptide. 3 cysteine pairs are disulfide-bonded: C25-C36, C53-C150, and C125-C142. The 120-residue stretch at 32 to 151 (YEGHCYNIFH…CGERNPFVCE (120 aa)) folds into the C-type lectin domain. Residues S64, E66, and E70 each coordinate Ca(2+). E151 is a Ca(2+) binding site.

It belongs to the snaclec family. In terms of assembly, heterodimer of subunits A and B; disulfide-linked. In terms of tissue distribution, expressed by the venom gland.

Its subcellular location is the secreted. Functionally, anticoagulant protein which binds to the gamma-carboxyglutamic acid-domain regions of factors IX (F9) and factor X (F10) in the presence of calcium with a 1 to 1 stoichiometry. This is Snaclec coagulation factor IX/factor X-binding protein subunit A from Gloydius halys (Chinese water mocassin).